A 170-amino-acid polypeptide reads, in one-letter code: Zinc finger matrin-type protein 5 (170 aa).

Residues Glu-51–Glu-79 form a C3H1-type zinc finger. The tract at residues Pro-150–Gly-170 is disordered.

Component of the U11/U12 snRNPs that are part of the U12-type spliceosome.

Its subcellular location is the nucleus. The sequence is that of Zinc finger matrin-type protein 5 (ZMAT5) from Bos taurus (Bovine).